A 310-amino-acid chain; its full sequence is p-hydroxybenzoic acid efflux pump subunit AaeA (310 aa).

Residues 12–32 (AITLVLVILAFIAIFRAWVYY) traverse the membrane as a helical segment.

It belongs to the membrane fusion protein (MFP) (TC 8.A.1) family.

Its subcellular location is the cell inner membrane. In terms of biological role, forms an efflux pump with AaeB. This is p-hydroxybenzoic acid efflux pump subunit AaeA from Salmonella gallinarum (strain 287/91 / NCTC 13346).